The primary structure comprises 243 residues: MSRLSLSQLVLLSIEEQRLALDEINQQLEQKTAIERVIWALEHLPNQFVLSSSFGIQAAVCLHLLTRQYPDIPVILTDTGYLFPETYQFIDELTSSLQLNLKVYRAEISSSWQEARYGKLWLQGIEGIERYNQINKVAPMEKALKELQAKTWFAGLRRQQSKSREHLPVLSIAKGIFKLLPIVDWDNKQIYQYLKQHNLPYHPLWEQGYLSVGDTHTTRKWQEGMSEEETRFFGLKRECGLHE.

Cysteine 239 functions as the Nucleophile; cysteine thiosulfonate intermediate in the catalytic mechanism.

This sequence belongs to the PAPS reductase family. CysH subfamily.

The protein localises to the cytoplasm. The catalysed reaction is [thioredoxin]-disulfide + sulfite + adenosine 3',5'-bisphosphate + 2 H(+) = [thioredoxin]-dithiol + 3'-phosphoadenylyl sulfate. Its pathway is sulfur metabolism; hydrogen sulfide biosynthesis; sulfite from sulfate: step 3/3. Catalyzes the formation of sulfite from phosphoadenosine 5'-phosphosulfate (PAPS) using thioredoxin as an electron donor. This Proteus mirabilis (strain HI4320) protein is Phosphoadenosine 5'-phosphosulfate reductase.